A 563-amino-acid chain; its full sequence is 2-isopropylmalate synthase (563 aa).

Residues 31 to 305 form the Pyruvate carboxyltransferase domain; it reads PIWMSTDLRD…DPGLDFAQIN (275 aa). Positions 40, 244, 246, and 280 each coordinate Mg(2+). Residues 437-563 form a regulatory domain region; that stretch reads RAEPIEYLSH…EWARLCGGAE (127 aa).

This sequence belongs to the alpha-IPM synthase/homocitrate synthase family. LeuA type 2 subfamily. In terms of assembly, homodimer. Mg(2+) is required as a cofactor.

The protein resides in the cytoplasm. It catalyses the reaction 3-methyl-2-oxobutanoate + acetyl-CoA + H2O = (2S)-2-isopropylmalate + CoA + H(+). It participates in amino-acid biosynthesis; L-leucine biosynthesis; L-leucine from 3-methyl-2-oxobutanoate: step 1/4. Its function is as follows. Catalyzes the condensation of the acetyl group of acetyl-CoA with 3-methyl-2-oxobutanoate (2-ketoisovalerate) to form 3-carboxy-3-hydroxy-4-methylpentanoate (2-isopropylmalate). This Parvibaculum lavamentivorans (strain DS-1 / DSM 13023 / NCIMB 13966) protein is 2-isopropylmalate synthase.